Reading from the N-terminus, the 259-residue chain is Imidazole glycerol phosphate synthase subunit HisF (259 aa).

Active-site residues include D11 and D130.

This sequence belongs to the HisA/HisF family. Heterodimer of HisH and HisF.

The protein localises to the cytoplasm. It carries out the reaction 5-[(5-phospho-1-deoxy-D-ribulos-1-ylimino)methylamino]-1-(5-phospho-beta-D-ribosyl)imidazole-4-carboxamide + L-glutamine = D-erythro-1-(imidazol-4-yl)glycerol 3-phosphate + 5-amino-1-(5-phospho-beta-D-ribosyl)imidazole-4-carboxamide + L-glutamate + H(+). Its pathway is amino-acid biosynthesis; L-histidine biosynthesis; L-histidine from 5-phospho-alpha-D-ribose 1-diphosphate: step 5/9. Its function is as follows. IGPS catalyzes the conversion of PRFAR and glutamine to IGP, AICAR and glutamate. The HisF subunit catalyzes the cyclization activity that produces IGP and AICAR from PRFAR using the ammonia provided by the HisH subunit. This is Imidazole glycerol phosphate synthase subunit HisF from Polaromonas naphthalenivorans (strain CJ2).